Reading from the N-terminus, the 483-residue chain is UDP-N-acetylmuramoyl-L-alanyl-D-glutamate--2,6-diaminopimelate ligase (483 aa).

Serine 30 is a binding site for UDP-N-acetyl-alpha-D-muramoyl-L-alanyl-D-glutamate. An ATP-binding site is contributed by 109–115 (GTNGKTT). UDP-N-acetyl-alpha-D-muramoyl-L-alanyl-D-glutamate contacts are provided by residues 151 to 152 (TT), serine 178, and arginine 186. N6-carboxylysine is present on lysine 218. Meso-2,6-diaminopimelate is bound by residues arginine 380, 403–406 (DNPR), glycine 453, and glutamate 457. The Meso-diaminopimelate recognition motif motif lies at 403–406 (DNPR).

Belongs to the MurCDEF family. MurE subfamily. Mg(2+) serves as cofactor. In terms of processing, carboxylation is probably crucial for Mg(2+) binding and, consequently, for the gamma-phosphate positioning of ATP.

The protein resides in the cytoplasm. The catalysed reaction is UDP-N-acetyl-alpha-D-muramoyl-L-alanyl-D-glutamate + meso-2,6-diaminopimelate + ATP = UDP-N-acetyl-alpha-D-muramoyl-L-alanyl-gamma-D-glutamyl-meso-2,6-diaminopimelate + ADP + phosphate + H(+). It functions in the pathway cell wall biogenesis; peptidoglycan biosynthesis. Catalyzes the addition of meso-diaminopimelic acid to the nucleotide precursor UDP-N-acetylmuramoyl-L-alanyl-D-glutamate (UMAG) in the biosynthesis of bacterial cell-wall peptidoglycan. This is UDP-N-acetylmuramoyl-L-alanyl-D-glutamate--2,6-diaminopimelate ligase from Chlamydia caviae (strain ATCC VR-813 / DSM 19441 / 03DC25 / GPIC) (Chlamydophila caviae).